The following is a 298-amino-acid chain: ATP synthase gamma chain (298 aa).

It belongs to the ATPase gamma chain family. F-type ATPases have 2 components, CF(1) - the catalytic core - and CF(0) - the membrane proton channel. CF(1) has five subunits: alpha(3), beta(3), gamma(1), delta(1), epsilon(1). CF(0) has three main subunits: a, b and c.

The protein resides in the cell inner membrane. In terms of biological role, produces ATP from ADP in the presence of a proton gradient across the membrane. The gamma chain is believed to be important in regulating ATPase activity and the flow of protons through the CF(0) complex. The polypeptide is ATP synthase gamma chain (Francisella tularensis subsp. tularensis (strain FSC 198)).